The primary structure comprises 127 residues: Fluoride-specific ion channel FluC (127 aa).

Helical transmembrane passes span Pro-4–Leu-24, Gly-36–Ala-56, Leu-68–Val-88, and Trp-98–Ile-118. Residues Gly-75 and Ser-78 each contribute to the Na(+) site.

Belongs to the fluoride channel Fluc/FEX (TC 1.A.43) family.

Its subcellular location is the cell inner membrane. It catalyses the reaction fluoride(in) = fluoride(out). With respect to regulation, na(+) is not transported, but it plays an essential structural role and its presence is essential for fluoride channel function. Its function is as follows. Fluoride-specific ion channel. Important for reducing fluoride concentration in the cell, thus reducing its toxicity. The protein is Fluoride-specific ion channel FluC of Nitrosomonas europaea (strain ATCC 19718 / CIP 103999 / KCTC 2705 / NBRC 14298).